Consider the following 330-residue polypeptide: MSGSCQFLSRETLSSSLGWIPLINALREIFTENVVCPTRLHYPIDEDNPSSTANNILLIMPCWIPGKFLGVKQVNVFPENTKHGLPSLSSHYLLSDATTGCHLAQLDGNELTSRRTAAASALASSYLSKEDSTSLLIIGSGKVAEKLIHAHCSVRPIRSVRIWNHRFESAKSLASRASKELPSIQIDAVPIQNLENAVKCSDIISSATLSKKPIIVGSWINPGTHIDLVGGFTPHMHEADSKCIQISNVFVDTRKGALHEAGDLLTPIKEGLFSPNEVIADLFDLCNNKHSGRSQLKNPAEAITLFKSVGDSREDLAAASLAYKVHNKSS.

This sequence belongs to the ornithine cyclodeaminase/mu-crystallin family.

The protein localises to the cytoplasm. This is an uncharacterized protein from Schizosaccharomyces pombe (strain 972 / ATCC 24843) (Fission yeast).